The sequence spans 100 residues: MPSSVTLLLLMGLSVCTSAEDGGEEQTLGAEAGPWVTVTLEAGAVASIQLQLQEVKRGKASQFFGLMGKRVRGYQMGQRGLLGRRASSTKGSVDEDQGAE.

An N-terminal signal peptide occupies residues 1-19 (MPSSVTLLLLMGLSVCTSA). 2 propeptides span residues 20–55 (EDGGEEQTLGAEAGPWVTVTLEAGAVASIQLQLQEV) and 85–100 (RASSTKGSVDEDQGAE). The disordered stretch occupies residues 80-100 (GLLGRRASSTKGSVDEDQGAE).

Belongs to the tachykinin family.

Its subcellular location is the secreted. Functionally, tachykinins are active peptides which excite neurons, evoke behavioral responses, are potent vasodilators and secretagogues, and contract (directly or indirectly) many smooth muscles. The protein is Tachykinin-4 of Oryctolagus cuniculus (Rabbit).